The following is a 302-amino-acid chain: MDQKRLTHLRQLEAESIHIIREVAAEFSNPVMLYSIGKDSSVMLHLARKAFYPGTLPFPLLHVDTGWKFREMYEFRDRTAKAYGCELLVHKNPEGVAMGINPFVHGSAKHTDIMKTEGLKQALNKYGFDAAFGGARRDEEKSRAKERIYSFRDRFHRWDPKNQRPELWHNYNGQINKGESIRVFPLSNWTEQDIWQYIWLENIDIVPLYLAAERPVLERDGMLMMIDDNRINLQSGEVIKKRMVRFRTLGCWPLTGAVESNAQTLPEIIEEMLVSTTSERQGRVIDRDQAGSMELKKRQGYF.

This sequence belongs to the PAPS reductase family. CysD subfamily. As to quaternary structure, heterodimer composed of CysD, the smaller subunit, and CysN.

It carries out the reaction sulfate + ATP + H(+) = adenosine 5'-phosphosulfate + diphosphate. Its pathway is sulfur metabolism; hydrogen sulfide biosynthesis; sulfite from sulfate: step 1/3. With CysN forms the ATP sulfurylase (ATPS) that catalyzes the adenylation of sulfate producing adenosine 5'-phosphosulfate (APS) and diphosphate, the first enzymatic step in sulfur assimilation pathway. APS synthesis involves the formation of a high-energy phosphoric-sulfuric acid anhydride bond driven by GTP hydrolysis by CysN coupled to ATP hydrolysis by CysD. In Escherichia coli O1:K1 / APEC, this protein is Sulfate adenylyltransferase subunit 2.